A 509-amino-acid polypeptide reads, in one-letter code: 2-isopropylmalate synthase (509 aa).

The region spanning 5-267 (IQIFDTTLRD…QTALNLEETK (263 aa)) is the Pyruvate carboxyltransferase domain. Mn(2+) is bound by residues Asp14, His202, His204, and Asn238. The regulatory domain stretch occupies residues 391–509 (KLETLQLQYV…AAENVEKVGN (119 aa)).

This sequence belongs to the alpha-IPM synthase/homocitrate synthase family. LeuA type 1 subfamily. Homodimer. Mn(2+) is required as a cofactor.

The protein resides in the cytoplasm. It carries out the reaction 3-methyl-2-oxobutanoate + acetyl-CoA + H2O = (2S)-2-isopropylmalate + CoA + H(+). Its pathway is amino-acid biosynthesis; L-leucine biosynthesis; L-leucine from 3-methyl-2-oxobutanoate: step 1/4. Functionally, catalyzes the condensation of the acetyl group of acetyl-CoA with 3-methyl-2-oxobutanoate (2-ketoisovalerate) to form 3-carboxy-3-hydroxy-4-methylpentanoate (2-isopropylmalate). The polypeptide is 2-isopropylmalate synthase (Staphylococcus aureus (strain bovine RF122 / ET3-1)).